We begin with the raw amino-acid sequence, 1064 residues long: Carbamoyl phosphate synthase large chain (1064 aa).

The interval 1 to 401 (MPKRNDIKKI…SLLKAVRSLE (401 aa)) is carboxyphosphate synthetic domain. Arg-129, Arg-169, Gly-175, Gly-176, Glu-208, Ile-210, Glu-215, Gly-241, Val-242, His-243, Gln-284, and Glu-298 together coordinate ATP. Residues 133 to 327 (KELCERIGEP…IAKMSAKIAI (195 aa)) enclose the ATP-grasp 1 domain. Residues Gln-284, Glu-298, and Asn-300 each contribute to the Mg(2+) site. The Mn(2+) site is built by Gln-284, Glu-298, and Asn-300. Positions 402–546 (IGVFHNDLQE…YSTYEWENES (145 aa)) are oligomerization domain. The interval 547–929 (KRSSKEKIIV…ALYKSFEAAK (383 aa)) is carbamoyl phosphate synthetic domain. Positions 671–861 (EKALQDLEIP…MAQLATQMIL (191 aa)) constitute an ATP-grasp 2 domain. ATP is bound by residues Arg-707, Ser-746, Leu-748, Glu-752, Gly-777, Val-778, His-779, Ser-780, Gln-820, and Glu-832. Residues Gln-820, Glu-832, and Asn-834 each contribute to the Mg(2+) site. Mn(2+) is bound by residues Gln-820, Glu-832, and Asn-834. The MGS-like domain maps to 930-1064 (LHMADYGSVL…QSRSFTTKNI (135 aa)). An allosteric domain region spans residues 930 to 1064 (LHMADYGSVL…QSRSFTTKNI (135 aa)).

This sequence belongs to the CarB family. Composed of two chains; the small (or glutamine) chain promotes the hydrolysis of glutamine to ammonia, which is used by the large (or ammonia) chain to synthesize carbamoyl phosphate. Tetramer of heterodimers (alpha,beta)4. It depends on Mg(2+) as a cofactor. Requires Mn(2+) as cofactor.

It carries out the reaction hydrogencarbonate + L-glutamine + 2 ATP + H2O = carbamoyl phosphate + L-glutamate + 2 ADP + phosphate + 2 H(+). It catalyses the reaction hydrogencarbonate + NH4(+) + 2 ATP = carbamoyl phosphate + 2 ADP + phosphate + 2 H(+). It participates in amino-acid biosynthesis; L-arginine biosynthesis; carbamoyl phosphate from bicarbonate: step 1/1. The protein operates within pyrimidine metabolism; UMP biosynthesis via de novo pathway; (S)-dihydroorotate from bicarbonate: step 1/3. Functionally, large subunit of the glutamine-dependent carbamoyl phosphate synthetase (CPSase). CPSase catalyzes the formation of carbamoyl phosphate from the ammonia moiety of glutamine, carbonate, and phosphate donated by ATP, constituting the first step of 2 biosynthetic pathways, one leading to arginine and/or urea and the other to pyrimidine nucleotides. The large subunit (synthetase) binds the substrates ammonia (free or transferred from glutamine from the small subunit), hydrogencarbonate and ATP and carries out an ATP-coupled ligase reaction, activating hydrogencarbonate by forming carboxy phosphate which reacts with ammonia to form carbamoyl phosphate. The protein is Carbamoyl phosphate synthase large chain of Lactococcus lactis subsp. lactis (strain IL1403) (Streptococcus lactis).